A 264-amino-acid chain; its full sequence is Myozenin-2 (264 aa).

An Omega-N-methylarginine modification is found at Arg53. The interval 90–135 is disordered; the sequence is GRVDGSNLEGGSQQGPSTPPNTPDPRSPPNPENIAPGYSGPLKEIP. Phosphoserine is present on Ser101. Residues 106–120 are compositionally biased toward pro residues; the sequence is STPPNTPDPRSPPNP. A phosphothreonine mark is found at Thr107 and Thr111. The residue at position 116 (Ser116) is a Phosphoserine.

It belongs to the myozenin family. In terms of assembly, interacts via its C-terminus with spectrin repeats 3 and 4 of ACTN2. Interacts with ACTN1, LDB3, MYOT and PPP3CA. As to expression, expressed specifically in heart and skeletal muscle. In skeletal muscle, localized to the soleus and plantaris muscles, which are predominantly composed of slow-twitch fibers.

The protein localises to the cytoplasm. It localises to the myofibril. It is found in the sarcomere. The protein resides in the z line. In terms of biological role, myozenins may serve as intracellular binding proteins involved in linking Z line proteins such as alpha-actinin, gamma-filamin, TCAP/telethonin, LDB3/ZASP and localizing calcineurin signaling to the sarcomere. Plays an important role in the modulation of calcineurin signaling. May play a role in myofibrillogenesis. This Mus musculus (Mouse) protein is Myozenin-2.